We begin with the raw amino-acid sequence, 313 residues long: MLNIDIIIIIIIDILVVLILTGFVSLCERRILALVQIRIGPALCFFGILTPITDGIKLFIKFIIFVISFDIIYLIGAMIITACCIFLGWFYFPIGFILLLDTGFTLTVMLCVHVFCSMFSTFFVGCFLFSSCFVYLSAMRTMFFSIISESGIFLLYTTIYSLDYFSFFGIKDVCVGQIYITNFYIAGVLFISVFWVSMLLDGLKLPFDYMECESELVAGLITELSGFFFVLYSVLEINHILLTTLLFASLCFGGLFICFKAILILIFGFFYPRVIGYRLKITTAQAFILIFLFYMCVLMFIWLFTTKIIAMLF.

The next 10 membrane-spanning stretches (helical) occupy residues 6–26 (IIIIIIIDILVVLILTGFVSL), 31–51 (ILALVQIRIGPALCFFGILTP), 62–82 (FIIFVISFDIIYLIGAMIITA), 84–104 (CIFLGWFYFPIGFILLLDTGF), 109–129 (MLCVHVFCSMFSTFFVGCFLF), 142–162 (MFFSIISESGIFLLYTTIYSL), 183–203 (FYIAGVLFISVFWVSMLLDGL), 216–235 (LVAGLITELSGFFFVLYSVL), 250–270 (LCFGGLFICFKAILILIFGFF), and 286–306 (AFILIFLFYMCVLMFIWLFTT).

This sequence belongs to the complex I subunit 1 family.

It is found in the mitochondrion inner membrane. It carries out the reaction a ubiquinone + NADH + 5 H(+)(in) = a ubiquinol + NAD(+) + 4 H(+)(out). Core subunit of the mitochondrial membrane respiratory chain NADH dehydrogenase (Complex I) that is believed to belong to the minimal assembly required for catalysis. Complex I functions in the transfer of electrons from NADH to the respiratory chain. The immediate electron acceptor for the enzyme is believed to be ubiquinone. This is NADH-ubiquinone oxidoreductase chain 1 (ND1) from Leishmania tarentolae (Sauroleishmania tarentolae).